The chain runs to 483 residues: Endoplasmic reticulum lectin 1 (483 aa).

An N-terminal signal peptide occupies residues 1–33 (MEEGGGGVRSLVPGGPVLLVLCGLLEASGGGRA). MRH domains are found at residues 111–246 (SSCS…LCSH) and 342–469 (SYCF…ICKI). A disulfide bridge connects residues Cys-113 and Cys-126. Asn-195 is a glycosylation site (N-linked (GlcNAc...) asparagine). Cystine bridges form between Cys-199–Cys-232, Cys-215–Cys-244, Cys-344–Cys-357, Cys-421–Cys-455, and Cys-436–Cys-467.

As to quaternary structure, may form a complex with OS9, HSPA5, SYVN1, and SEL1L with which it interacts directly. Interacts (via PRKCSH 2 domain) with KREMEN2 (when glycosylated). Interacts with HSPA5. In terms of processing, isoform 1 and isoform 2 are N-glycosylated.

The protein resides in the endoplasmic reticulum lumen. Functionally, probable lectin that binds selectively to improperly folded lumenal proteins. May function in endoplasmic reticulum quality control and endoplasmic reticulum-associated degradation (ERAD) of both non-glycosylated proteins and glycoproteins. In Homo sapiens (Human), this protein is Endoplasmic reticulum lectin 1 (ERLEC1).